We begin with the raw amino-acid sequence, 279 residues long: MNLFFLFIIPTILAVKPFRSFNNISLIDNGNVESVRAVVIDYCDIRHPNNLCKKHFEIDSYWNDDTDCFTNIGCKVYGGFDIIGGHTPKVGTVCRLKKGENKFGYCNSKGNCVERDFKESFGISIKIKGISNKGDDEPACPQYKNTWINYGKCNEPYYCGTNHGLFYANKRKLDYFPTDGEKCNSNNIPYAVCYLGRCHTTGGFFSEFGTIVKNVEIVTLSDGKNSSRRGKHKNLPTSKVFDSYSIYDIDPKNWKIEDDDKDVTVHENTLDPKSDSRLC.

An N-terminal signal peptide occupies residues 1 to 14 (MNLFFLFIIPTILA). Residues 15-27 (VKPFRSFNNISLI) constitute a propeptide that is removed on maturation.

Post-translationally, contains several disulfide bonds. Posterior glands which appear to be connected with the stylet through a series of ducts.

It localises to the secreted. In terms of biological role, part of a complex mixture of neurotoxins which P.tritici utilizes to capture prey. It has contracting-paralyzing activity in insects. The protein is Toxin TxP-I of Pyemotes tritici (Straw itch mite).